Reading from the N-terminus, the 394-residue chain is Chorismate synthase (394 aa).

R40 and R46 together coordinate NADP(+). FMN contacts are provided by residues 135 to 137 and 255 to 256; these read RAS and QA. A disordered region spans residues 270–291; the sequence is RRRGSGAHDEIEPAGAGSRRVR. FMN is bound by residues G302, 317–321, and R343; that span reads KPISS.

It belongs to the chorismate synthase family. Homotetramer. FMNH2 serves as cofactor.

It catalyses the reaction 5-O-(1-carboxyvinyl)-3-phosphoshikimate = chorismate + phosphate. The protein operates within metabolic intermediate biosynthesis; chorismate biosynthesis; chorismate from D-erythrose 4-phosphate and phosphoenolpyruvate: step 7/7. Functionally, catalyzes the anti-1,4-elimination of the C-3 phosphate and the C-6 proR hydrogen from 5-enolpyruvylshikimate-3-phosphate (EPSP) to yield chorismate, which is the branch point compound that serves as the starting substrate for the three terminal pathways of aromatic amino acid biosynthesis. This reaction introduces a second double bond into the aromatic ring system. The chain is Chorismate synthase from Frankia casuarinae (strain DSM 45818 / CECT 9043 / HFP020203 / CcI3).